The chain runs to 184 residues: NADH-quinone oxidoreductase subunit B (184 aa).

Cys37, Cys38, Cys103, and Cys132 together coordinate [4Fe-4S] cluster.

This sequence belongs to the complex I 20 kDa subunit family. NDH-1 is composed of 14 different subunits. Subunits NuoB, C, D, E, F, and G constitute the peripheral sector of the complex. [4Fe-4S] cluster serves as cofactor.

Its subcellular location is the cell membrane. It catalyses the reaction a quinone + NADH + 5 H(+)(in) = a quinol + NAD(+) + 4 H(+)(out). NDH-1 shuttles electrons from NADH, via FMN and iron-sulfur (Fe-S) centers, to quinones in the respiratory chain. The immediate electron acceptor for the enzyme in this species is believed to be a menaquinone. Couples the redox reaction to proton translocation (for every two electrons transferred, four hydrogen ions are translocated across the cytoplasmic membrane), and thus conserves the redox energy in a proton gradient. This Mycolicibacterium vanbaalenii (strain DSM 7251 / JCM 13017 / BCRC 16820 / KCTC 9966 / NRRL B-24157 / PYR-1) (Mycobacterium vanbaalenii) protein is NADH-quinone oxidoreductase subunit B.